The chain runs to 285 residues: Transcription initiation factor IIE subunit beta (285 aa).

2 stretches are compositionally biased toward polar residues: residues 1–10 and 33–44; these read MSSLSDQLSS and TPTAYLNSNDGH. Residues 1–56 are disordered; it reads MSSLSDQLSSFKKKVANQPIYAKPQPRQPASPTPTAYLNSNDGHSSAASSPGSYSL. Residues 45–55 are compositionally biased toward low complexity; sequence SSAASSPGSYS. The segment at residues 67-142 is a DNA-binding region (TFIIE beta); that stretch reads YSQPADSGVG…FTFKPLHNIR (76 aa). Positions 240–272 are disordered; it reads PTSVDPSTVKRAGHNQTPKQKKPKTRRGKITNT. Over residues 258–268 the composition is skewed to basic residues; it reads KQKKPKTRRGK.

This sequence belongs to the TFIIE beta subunit family. As to quaternary structure, TFIIE is a tetramer of two alpha (tfa1) and two beta (tfa2) subunits. TFIIE associates with RNA polymerase II via the beta subunit.

It is found in the nucleus. Recruits TFIIH to the initiation complex and stimulates the RNA polymerase II C-terminal domain kinase and DNA-dependent ATPase activities of TFIIH. Both TFIIH and TFIIE are required for promoter clearance by RNA polymerase. The protein is Transcription initiation factor IIE subunit beta (tfa2) of Schizosaccharomyces pombe (strain 972 / ATCC 24843) (Fission yeast).